We begin with the raw amino-acid sequence, 426 residues long: Antigen EM13 (426 aa).

An F-BAR domain is found at 1–240 (MIQERADIEK…TVAKVDADAD (240 aa)). 2 disordered regions span residues 287–315 (LTSL…ISTS) and 350–369 (ISKE…FVDD). The segment covering 305–315 (TTDSGSNISTS) has biased composition (polar residues). An SH3 domain is found at 371-426 (RPGVPIRALYDYVGVEADELSFNSGDLFEKLEDEDEQGWCKGRKDGRVGLYPRQLR).

The polypeptide is Antigen EM13 (EM13) (Echinococcus multilocularis (Fox tapeworm)).